We begin with the raw amino-acid sequence, 360 residues long: Nucleoporin SEH1 (360 aa).

6 WD repeats span residues 10 to 49 (DHKD…DWHC), 55 to 96 (THSG…SNDK), 111 to 152 (DSRT…NLSQ), 160 to 210 (SCKL…RKYA), 217 to 258 (TVTD…KELT), and 276 to 315 (NHNS…NWKC). K12 participates in a covalent cross-link: Glycyl lysine isopeptide (Lys-Gly) (interchain with G-Cter in SUMO2). Residues S179 and S190 each carry the phosphoserine modification. The span at 324-354 (SPVNGSSQQGTSNPSLGSTIPSLQNSLNGSS) shows a compositional bias: polar residues. Residues 324-360 (SPVNGSSQQGTSNPSLGSTIPSLQNSLNGSSAGRKHS) form a disordered region.

Belongs to the WD repeat SEC13 family. Component of the Nup107-160 subcomplex of the nuclear pore complex (NPC). The Nup107-160 subcomplex includes NUP160, NUP133, NUP107, NUP98, NUP85, NUP43, NUP37, SEH1 and SEC13. The SEH1 subunit appears to be only weakly associated with the Nup107-160 subcomplex. Component of the GATOR2 subcomplex, composed of MIOS, SEC13, SEH1L, WDR24 and WDR59. The GATOR2 complex interacts with CASTOR1 and CASTOR2; the interaction is negatively regulated by arginine. The GATOR2 complex interacts with SESN1, SESN2 and SESN3; the interaction is negatively regulated by amino acids. SESN1, SESN2 and SESN3 convey leucine availability via direct interaction with SEH1L and WDR24.

The protein localises to the chromosome. Its subcellular location is the centromere. The protein resides in the kinetochore. It is found in the nucleus. It localises to the nuclear pore complex. The protein localises to the lysosome membrane. The GATOR2 complex is negatively regulated by the upstream amino acid sensors CASTOR1 and SESN2, which sequester the GATOR2 complex in absence of amino acids. In the presence of abundant amino acids, GATOR2 is released from CASTOR1 and SESN2 and activated. Its function is as follows. Component of the Nup107-160 subcomplex of the nuclear pore complex (NPC). The Nup107-160 subcomplex is required for the assembly of a functional NPC. The Nup107-160 subcomplex is also required for normal kinetochore microtubule attachment, mitotic progression and chromosome segregation. This subunit plays a role in recruitment of the Nup107-160 subcomplex to the kinetochore. In terms of biological role, as a component of the GATOR2 complex, functions as an activator of the amino acid-sensing branch of the mTORC1 signaling pathway. The GATOR2 complex indirectly activates mTORC1 through the inhibition of the GATOR1 subcomplex. GATOR2 probably acts as an E3 ubiquitin-protein ligase toward GATOR1. In the presence of abundant amino acids, the GATOR2 complex mediates ubiquitination of the NPRL2 core component of the GATOR1 complex, leading to GATOR1 inactivation. In the absence of amino acids, GATOR2 is inhibited, activating the GATOR1 complex. Within the GATOR2 complex, SEC13 and SEH1L are required to stabilize the complex. This Homo sapiens (Human) protein is Nucleoporin SEH1 (SEH1L).